Here is a 350-residue protein sequence, read N- to C-terminus: Probable galactose-1-phosphate uridylyltransferase (350 aa).

The segment at proline 31–proline 52 is disordered. Position 54 (cysteine 54) interacts with Zn(2+). UDP-alpha-D-glucose is bound by residues asparagine 76 to aspartate 77 and asparagine 152. Zn(2+) is bound at residue histidine 163. The active-site Tele-UMP-histidine intermediate is histidine 165. Residues glutamine 167, lysine 314–valine 317, and phenylalanine 319–glutamate 320 contribute to the UDP-alpha-D-glucose site.

This sequence belongs to the galactose-1-phosphate uridylyltransferase type 1 family. As to quaternary structure, homodimer. It depends on Zn(2+) as a cofactor.

It carries out the reaction alpha-D-galactose 1-phosphate + UDP-alpha-D-glucose = alpha-D-glucose 1-phosphate + UDP-alpha-D-galactose. It participates in carbohydrate metabolism; galactose metabolism. This Drosophila melanogaster (Fruit fly) protein is Probable galactose-1-phosphate uridylyltransferase (Galt).